The primary structure comprises 488 residues: Membrane-bound lytic murein transglycosylase F (488 aa).

The N-terminal stretch at 1-25 is a signal peptide; the sequence is MFARPAIRMRCATGLLAIGTLLMLA. Positions 26-269 are non-LT domain; sequence GCGEEPKPSV…RLKERYYGHV (244 aa). Residues 270–488 form an LT domain region; it reads DVLGYVGAYT…RTLDEQTPPL (219 aa). The active site involves Glu-316.

It in the N-terminal section; belongs to the bacterial solute-binding protein 3 family. The protein in the C-terminal section; belongs to the transglycosylase Slt family.

Its subcellular location is the cell outer membrane. The enzyme catalyses Exolytic cleavage of the (1-&gt;4)-beta-glycosidic linkage between N-acetylmuramic acid (MurNAc) and N-acetylglucosamine (GlcNAc) residues in peptidoglycan, from either the reducing or the non-reducing ends of the peptidoglycan chains, with concomitant formation of a 1,6-anhydrobond in the MurNAc residue.. Murein-degrading enzyme that degrades murein glycan strands and insoluble, high-molecular weight murein sacculi, with the concomitant formation of a 1,6-anhydromuramoyl product. Lytic transglycosylases (LTs) play an integral role in the metabolism of the peptidoglycan (PG) sacculus. Their lytic action creates space within the PG sacculus to allow for its expansion as well as for the insertion of various structures such as secretion systems and flagella. This Ectopseudomonas mendocina (strain ymp) (Pseudomonas mendocina) protein is Membrane-bound lytic murein transglycosylase F.